The chain runs to 268 residues: Lipopolysaccharide core heptose(I) kinase WaaP (268 aa).

Tyr30, Tyr48, and Tyr98 each carry phosphotyrosine; by autocatalysis. The active site involves Asp163. Residues Tyr165, Tyr211, Tyr231, Tyr258, and Tyr264 each carry the phosphotyrosine; by autocatalysis modification.

The protein belongs to the protein kinase superfamily. KdkA/RfaP family. In terms of assembly, interacts with acyl-AcpP. The WaaP hydrophobic channel can accommodate acyl chains of different lengths, but myristyl-ACP is likely its physiological binding partner. Mg(2+) serves as cofactor.

Its subcellular location is the cytoplasm. It catalyses the reaction an L-alpha-D-Hep-(1-&gt;3)-L-alpha-D-Hep-(1-&gt;5)-[alpha-Kdo-(2-&gt;4)]-alpha-Kdo-(2-&gt;6)-lipid A + ATP = an L-alpha-D-Hep-(1-&gt;3)-4-O-phospho-L-alpha-D-Hep-(1-&gt;5)-[alpha-Kdo-(2-&gt;4)]-alpha-Kdo-(2-&gt;6)-lipid A + ADP + H(+). The catalysed reaction is L-tyrosyl-[protein] + ATP = O-phospho-L-tyrosyl-[protein] + ADP + H(+). It functions in the pathway bacterial outer membrane biogenesis; LPS core biosynthesis. With respect to regulation, acylated-acyl carrier protein (acyl-ACP) acts as a very tightly bound cofactor necessary for the production and stability of active WaaP kinase. Functionally, kinase involved in the biosynthesis of the core oligosaccharide region of lipopolysaccharide (LPS). Catalyzes the phosphorylation of heptose I (HepI), the first heptose added to the Kdo2-lipid A module. Also has protein-tyrosine kinase activity: autophosphorylates on all Tyr residues; in vitro can phosphorylate poly(Glu,Tyr). This Pseudomonas aeruginosa (strain ATCC 15692 / DSM 22644 / CIP 104116 / JCM 14847 / LMG 12228 / 1C / PRS 101 / PAO1) protein is Lipopolysaccharide core heptose(I) kinase WaaP.